The chain runs to 334 residues: N-acetyl-gamma-glutamyl-phosphate reductase (334 aa).

The active site involves C154.

This sequence belongs to the NAGSA dehydrogenase family. Type 1 subfamily.

It is found in the cytoplasm. The enzyme catalyses N-acetyl-L-glutamate 5-semialdehyde + phosphate + NADP(+) = N-acetyl-L-glutamyl 5-phosphate + NADPH + H(+). Its pathway is amino-acid biosynthesis; L-arginine biosynthesis; N(2)-acetyl-L-ornithine from L-glutamate: step 3/4. Functionally, catalyzes the NADPH-dependent reduction of N-acetyl-5-glutamyl phosphate to yield N-acetyl-L-glutamate 5-semialdehyde. The protein is N-acetyl-gamma-glutamyl-phosphate reductase of Salmonella typhimurium (strain LT2 / SGSC1412 / ATCC 700720).